The sequence spans 189 residues: Elongation factor P (189 aa).

This sequence belongs to the elongation factor P family.

Its subcellular location is the cytoplasm. Its pathway is protein biosynthesis; polypeptide chain elongation. Its function is as follows. Involved in peptide bond synthesis. Stimulates efficient translation and peptide-bond synthesis on native or reconstituted 70S ribosomes in vitro. Probably functions indirectly by altering the affinity of the ribosome for aminoacyl-tRNA, thus increasing their reactivity as acceptors for peptidyl transferase. The sequence is that of Elongation factor P from Aster yellows witches'-broom phytoplasma (strain AYWB).